The chain runs to 256 residues: 5'-nucleotidase YutF (256 aa).

It belongs to the HAD-like hydrolase superfamily. NagD family. Homodimer. Mg(2+) is required as a cofactor.

Its subcellular location is the cytoplasm. The catalysed reaction is a ribonucleoside 5'-phosphate + H2O = a ribonucleoside + phosphate. The enzyme catalyses XMP + H2O = xanthosine + phosphate. Functionally, catalyzes the hydrolysis of various purine and pyrimidine 5'-nucleotides, showing preference for 5'-nucleoside monophosphates and exhibiting the highest catalytic activity toward 5'-XMP. Also shows a relatively high phosphohydrolase activity toward the nucleotide precursors ribose-5-phosphate (R5P) and 5-phosphoribosyl-1-pyrophosphate (PRPP), and toward the non-natural substrate p-nitrophenyl phosphate (pNPP). The polypeptide is 5'-nucleotidase YutF (yutF) (Bacillus subtilis (strain 168)).